Consider the following 22-residue polypeptide: Protein YncP (22 aa).

The sequence is that of Protein YncP from Escherichia coli (strain K12).